The primary structure comprises 122 residues: UPF0102 protein XCV0816 (122 aa).

This sequence belongs to the UPF0102 family.

The sequence is that of UPF0102 protein XCV0816 from Xanthomonas euvesicatoria pv. vesicatoria (strain 85-10) (Xanthomonas campestris pv. vesicatoria).